We begin with the raw amino-acid sequence, 101 residues long: Apolipoprotein C-II (101 aa).

The signal sequence occupies residues 1–22 (MGIRYLLVLVLVLLVLGCEVQG). Positions 66–74 (TMDEKIREI) are lipid binding. A lipoprotein lipase cofactor region spans residues 78–101 (STAAVSTYAGIFTDQLLSMLKGDQ).

Belongs to the apolipoprotein C2 family. Post-translationally, proapolipoprotein C-II is synthesized as a sialic acid containing glycoprotein which is subsequently desialylated prior to its proteolytic processing. In terms of processing, proapolipoprotein C-II, the major form found in plasma undergoes proteolytic cleavage of its N-terminal hexapeptide to generate apolipoprotein C-II, which occurs as the minor form in plasma.

It localises to the secreted. Functionally, component of chylomicrons, very low-density lipoproteins (VLDL), low-density lipoproteins (LDL), and high-density lipoproteins (HDL) in plasma. Plays an important role in lipoprotein metabolism as an activator of lipoprotein lipase. Both proapolipoprotein C-II and apolipoprotein C-II can activate lipoprotein lipase. The polypeptide is Apolipoprotein C-II (APOC2) (Leptonychotes weddellii (Weddell seal)).